A 524-amino-acid polypeptide reads, in one-letter code: Peptide chain release factor 3 (524 aa).

A tr-type G domain is found at 11-278 (AKRRTFAIIS…SFVQYAPEPG (268 aa)). Residues 20-27 (SHPDAGKT), 88-92 (DTPGH), and 142-145 (NKLD) contribute to the GTP site.

This sequence belongs to the TRAFAC class translation factor GTPase superfamily. Classic translation factor GTPase family. PrfC subfamily.

It localises to the cytoplasm. Functionally, increases the formation of ribosomal termination complexes and stimulates activities of RF-1 and RF-2. It binds guanine nucleotides and has strong preference for UGA stop codons. It may interact directly with the ribosome. The stimulation of RF-1 and RF-2 is significantly reduced by GTP and GDP, but not by GMP. The protein is Peptide chain release factor 3 of Lacticaseibacillus paracasei (strain ATCC 334 / BCRC 17002 / CCUG 31169 / CIP 107868 / KCTC 3260 / NRRL B-441) (Lactobacillus paracasei).